Here is a 273-residue protein sequence, read N- to C-terminus: Pantothenate synthetase (273 aa).

An ATP-binding site is contributed by 27-34 (MGALHDGH). The active-site Proton donor is the His-34. Gln-58 serves as a coordination point for (R)-pantoate. Residue Gln-58 participates in beta-alanine binding. An ATP-binding site is contributed by 144 to 147 (GKKD). Gln-150 is a (R)-pantoate binding site. ATP is bound by residues Val-173 and 181–184 (LSSR).

This sequence belongs to the pantothenate synthetase family. Homodimer.

Its subcellular location is the cytoplasm. It carries out the reaction (R)-pantoate + beta-alanine + ATP = (R)-pantothenate + AMP + diphosphate + H(+). Its pathway is cofactor biosynthesis; (R)-pantothenate biosynthesis; (R)-pantothenate from (R)-pantoate and beta-alanine: step 1/1. In terms of biological role, catalyzes the condensation of pantoate with beta-alanine in an ATP-dependent reaction via a pantoyl-adenylate intermediate. This chain is Pantothenate synthetase, found in Campylobacter concisus (strain 13826).